A 453-amino-acid polypeptide reads, in one-letter code: Acid phosphatase (453 aa).

A signal peptide spans 1–18; it reads MFLQNLFLGFLAVVCANA. His69 acts as the Nucleophile in catalysis. N-linked (GlcNAc...) asparagine glycans are attached at residues Asn95, Asn151, Asn183, Asn193, Asn243, and Asn319. The active-site Proton donor is the Asp331. N-linked (GlcNAc...) asparagine glycosylation is found at Asn410, Asn429, and Asn443.

It belongs to the histidine acid phosphatase family.

Its subcellular location is the secreted. The protein resides in the cell wall. It carries out the reaction a phosphate monoester + H2O = an alcohol + phosphate. The protein is Acid phosphatase (pho1) of Schizosaccharomyces pombe (strain 972 / ATCC 24843) (Fission yeast).